The primary structure comprises 197 residues: UPF0319 protein VP0761 (197 aa).

Positions 1 to 20 are cleaved as a signal peptide; that stretch reads MKKTTTLLGICAILSAPAFA.

It belongs to the UPF0319 family.

In Vibrio parahaemolyticus serotype O3:K6 (strain RIMD 2210633), this protein is UPF0319 protein VP0761.